A 224-amino-acid chain; its full sequence is Vesicle transport through interaction with t-SNAREs homolog 1A (224 aa).

The Cytoplasmic portion of the chain corresponds to 1–199 (MSADFEGYEQ…GMLRRIIQNR (199 aa)). Coiled-coil stretches lie at residues 31–92 (PDEK…KRSR) and 106–185 (DAGN…GKSS). The helical; Anchor for type IV membrane protein transmembrane segment at 200–220 (ILLVILGIIVVITILTAITFF) threads the bilayer. Topologically, residues 221-224 (VRGH) are vesicular.

The protein belongs to the VTI1 family. As to quaternary structure, interacts with distinct SNARE complexes that contain either STX5 or STX6. Interacts with NAPA and, to a lesser extent, with NAPG. Identified in a complex containing STX6, STX12, VAMP4 and VTI1A. As to expression, specifically expressed in the neuronal tissues cerebellum, cortex and hippocampus. Isoform 1/VTI1A is expressed in the same neuronal tissues but also in lung, liver, kidney and spleen.

The protein resides in the membrane. It localises to the cytoplasmic vesicle. Its subcellular location is the secretory vesicle. The protein localises to the synaptic vesicle membrane. It is found in the clathrin-coated vesicle membrane. The protein resides in the golgi apparatus membrane. In terms of biological role, V-SNARE that mediates vesicle transport pathways through interactions with t-SNAREs on the target membrane. These interactions are proposed to mediate aspects of the specificity of vesicle trafficking and to promote fusion of the lipid bilayers. Involved in vesicular transport from the late endosomes to the trans-Golgi network. Along with VAMP7, involved in an non-conventional RAB1-dependent traffic route to the cell surface used by KCNIP1 and KCND2. May be concerned with increased secretion of cytokines associated with cellular senescence. The polypeptide is Vesicle transport through interaction with t-SNAREs homolog 1A (Vti1a) (Rattus norvegicus (Rat)).